Consider the following 162-residue polypeptide: Phosphopantetheine adenylyltransferase (162 aa).

A substrate-binding site is contributed by Ser-11. ATP-binding positions include 11 to 12 (SF) and His-19. Substrate contacts are provided by Lys-43, Val-76, and Arg-90. Residues 91-93 (GLR), Glu-101, and 126-132 (HLYISSS) each bind ATP.

It belongs to the bacterial CoaD family. As to quaternary structure, homohexamer. Mg(2+) serves as cofactor.

It is found in the cytoplasm. The enzyme catalyses (R)-4'-phosphopantetheine + ATP + H(+) = 3'-dephospho-CoA + diphosphate. Its pathway is cofactor biosynthesis; coenzyme A biosynthesis; CoA from (R)-pantothenate: step 4/5. In terms of biological role, reversibly transfers an adenylyl group from ATP to 4'-phosphopantetheine, yielding dephospho-CoA (dPCoA) and pyrophosphate. This is Phosphopantetheine adenylyltransferase from Streptococcus pneumoniae (strain Hungary19A-6).